Reading from the N-terminus, the 206-residue chain is Superoxide dismutase [Mn] (206 aa).

4 residues coordinate Mn(2+): histidine 27, histidine 82, aspartate 168, and histidine 172.

This sequence belongs to the iron/manganese superoxide dismutase family. As to quaternary structure, homodimer. It depends on Mn(2+) as a cofactor.

The enzyme catalyses 2 superoxide + 2 H(+) = H2O2 + O2. In terms of biological role, destroys superoxide anion radicals which are normally produced within the cells and which are toxic to biological systems. The chain is Superoxide dismutase [Mn] (sodA) from Escherichia coli (strain K12).